The primary structure comprises 459 residues: Argininosuccinate lyase (459 aa).

It belongs to the lyase 1 family. Argininosuccinate lyase subfamily.

It is found in the cytoplasm. The catalysed reaction is 2-(N(omega)-L-arginino)succinate = fumarate + L-arginine. Its pathway is amino-acid biosynthesis; L-arginine biosynthesis; L-arginine from L-ornithine and carbamoyl phosphate: step 3/3. The protein is Argininosuccinate lyase of Prochlorococcus marinus subsp. pastoris (strain CCMP1986 / NIES-2087 / MED4).